The chain runs to 257 residues: UPF0246 protein Rpic_2164 (257 aa).

The protein belongs to the UPF0246 family.

The chain is UPF0246 protein Rpic_2164 from Ralstonia pickettii (strain 12J).